A 526-amino-acid chain; its full sequence is Acid-sensing ion channel 1 (526 aa).

Residues 1–49 (MELKTEEEEVGGVQPVSIQAFASSSTLHGLAHIFSYERLSLKRALWALC) are Cytoplasmic-facing. The chain crosses the membrane as a helical span at residues 50-66 (FLGSLAVLLCVCTERVQ). The Extracellular segment spans residues 67 to 425 (YYFCYHHVTK…ETIEQKKAYE (359 aa)). 7 cysteine pairs are disulfide-bonded: C93/C194, C172/C179, C290/C365, C308/C361, C312/C359, C321/C343, and C323/C335. N-linked (GlcNAc...) asparagine glycosylation is found at N366 and N393. The discontinuously helical transmembrane segment at 426–456 (IAGLLGDIGGQMGLFIGASILTVLELFDYAY) threads the bilayer. The GAS motif; ion selectivity filter signature appears at 442 to 444 (GAS). Over 457–526 (EVIKHRLCRR…ARGTFEDFTC (70 aa)) the chain is Cytoplasmic. Phosphoserine occurs at positions 477 and 497.

Belongs to the amiloride-sensitive sodium channel (TC 1.A.6) family. ASIC1 subfamily. As to quaternary structure, homotrimer. Heterotrimer; with other ASIC proteins producing channel with different properties. Interacts with PICK1; regulates ASIC1 clustering in membranes. Interacts with STOM; alters heterotrimeric ASIC channels activity. PH-gating could be regulated by serine proteases. Post-translationally, phosphorylation by PKA regulates interaction with PICK1 and subcellular localization. Phosphorylation by PKC may regulate the channel. In terms of tissue distribution, expressed in dorsal root ganglia and sciatic nerve (at protein level). Widely distributed throughout the brain. Expressed in olfactory bulb, neo and allocortical regions, dentate granule cells, pyramidal cells of CA1-CA3 subfields of the hippocampal formation, habenula, basolateral amygdaloid nuclei, and in the Purkinje and granule cells of the cerebellum. Diffusely detected over most other regions of the basal ganglia, including thalamic nuclei, substantia nigra, striatum and globus pallidus, hypothalamus, midbrain, pons, medulla and choroid plexus. Expressed only in dorsal root ganglion (DRG). As to expression, expressed exclusively in trigeminal ganglion and dorsal root ganglion.

The protein resides in the cell membrane. It is found in the postsynaptic cell membrane. Its subcellular location is the cell projection. It localises to the dendrite. The catalysed reaction is Na(+)(in) = Na(+)(out). It catalyses the reaction Li(+)(in) = Li(+)(out). The enzyme catalyses K(+)(in) = K(+)(out). It carries out the reaction Ca(2+)(in) = Ca(2+)(out). The catalysed reaction is H(+)(in) = H(+)(out). Its activity is regulated as follows. Inhibited by the diuretic drug amiloride. External calcium is required to potentiate proton activation of ASIC1 at physiological concentrations, but at higher, non-physiological concentrations, it inhibits activation. Also potentiated by other multivalent cations like Mg(2+), Ba(2+). Activated by FMRFamide-related neuropeptides. Inhibited by anti-inflammatory drugs like salicylic acid. The spider venom psalmotoxin-1 specifically inhibits the ASIC1 homotrimer. The snake venom mambalgin-1, mambalgin-2 and mambalgin-3 inhibit the homotrimer of Asic1a (ASIC1 isoform 1). The snake venom mambalgin-1 and mambalgin-2 inhibit heterotrimers of Asic1a-Asic1b (ASIC1 isoform 1-ASIC1 isoform 3). Heterotrimer of Asic1a-Asic2a is inhibited by the snake venom mambalgin-1, mambalgin-2 and mambalgin-3. Heterotrimer of Asic1a-Asic2b is inhibited by the snake venom mambalgin-1 and mambalgin-2. The spider venom Pi-theraphotoxin-Hm3a inhibits the homotrimer of Asic1a (ASIC1 isoform 1). The spider venom Pi-theraphotoxin-Hm3a inhibits heterotrimers of Asic1a-Asic1b (ASIC1 isoform 1-ASIC1 isoform 3). The spider venom Pi-hexatoxin-Hi1a inhibits the ASIC1 homotrimer. Not inhibited by extracellular calcium. Its function is as follows. Forms voltage-independent, pH-gated trimeric sodium channels that act as postsynaptic excitatory receptors in the nervous system, playing a crucial role in regulating synaptic plasticity, learning, and memory. Upon extracellular pH drop this channel elicits transient, fast activating, and completely desensitizing inward currents. Displays high selectivity for sodium ions but can also permit the permeation of other cations. Regulates more or less directly intracellular calcium concentration and CaMKII phosphorylation, and thereby the density of dendritic spines. Modulates neuronal activity in the circuits underlying innate fear. Permeable to other cations including calcium, lithium and potassium. In terms of biological role, pH activation and steady-state inactivation are shifted to more acidic values. Forms channels that are not permeable to calcium as it discrimates stronger between monovalent cations. Functionally, has no pH-gated sodium channel activity per se but can associate with other ASICs and regulate their pH-sensitivity. This is Acid-sensing ion channel 1 from Rattus norvegicus (Rat).